The sequence spans 1010 residues: BrkA autotransporter (1010 aa).

The first 42 residues, 1–42 (MYLDRFRQCPSSLQIPRSAWRLHALAAALALAGMARLAPAAA), serve as a signal peptide directing secretion. The Autotransporter domain maps to 742-1010 (LRADAGGPWA…SFHAGYRYSF (269 aa)).

The protein localises to the periplasm. The protein resides in the secreted. It localises to the cell surface. Its subcellular location is the cell outer membrane. Functionally, inhibits the classical pathway of complement activation and prevents accumulation of deposited C4. The protein is BrkA autotransporter of Bordetella pertussis (strain Tohama I / ATCC BAA-589 / NCTC 13251).